A 207-amino-acid polypeptide reads, in one-letter code: Large ribosomal subunit protein uL4 (207 aa).

A disordered region spans residues 50–76 (KTKTVSEVSGTTKKPFKQKGTGNARQG).

The protein belongs to the universal ribosomal protein uL4 family. In terms of assembly, part of the 50S ribosomal subunit.

One of the primary rRNA binding proteins, this protein initially binds near the 5'-end of the 23S rRNA. It is important during the early stages of 50S assembly. It makes multiple contacts with different domains of the 23S rRNA in the assembled 50S subunit and ribosome. Functionally, forms part of the polypeptide exit tunnel. The polypeptide is Large ribosomal subunit protein uL4 (Rickettsia typhi (strain ATCC VR-144 / Wilmington)).